The primary structure comprises 357 residues: Ribosomal RNA large subunit methyltransferase M (357 aa).

S-adenosyl-L-methionine is bound by residues Ser-183, 216–219 (APGG), Asp-235, Asp-255, and Asp-271. Catalysis depends on Lys-300, which acts as the Proton acceptor.

Belongs to the class I-like SAM-binding methyltransferase superfamily. RNA methyltransferase RlmE family. RlmM subfamily. In terms of assembly, monomer.

It is found in the cytoplasm. It carries out the reaction cytidine(2498) in 23S rRNA + S-adenosyl-L-methionine = 2'-O-methylcytidine(2498) in 23S rRNA + S-adenosyl-L-homocysteine + H(+). Catalyzes the 2'-O-methylation at nucleotide C2498 in 23S rRNA. The sequence is that of Ribosomal RNA large subunit methyltransferase M from Pseudomonas fluorescens (strain Pf0-1).